We begin with the raw amino-acid sequence, 283 residues long: SNF1-related protein kinase regulatory subunit beta-1 (283 aa).

Positions 1–10 (MGNANGKDED) are enriched in basic and acidic residues. The disordered stretch occupies residues 1–63 (MGNANGKDED…PARSPSPFLF (63 aa)). Residue G2 is the site of N-myristoyl glycine attachment. Low complexity predominate over residues 43–60 (SDSMSSSPPGSPARSPSP). The interval 101–178 (PTIITWNQGG…VGNVCNILDV (78 aa)) is kinase-interacting sequence (KIS). The association with SNF1 complex (ASC) stretch occupies residues 215–283 (EPLAVPPQLH…TVVLYKPLTR (69 aa)).

Belongs to the 5'-AMP-activated protein kinase beta subunit family. As to quaternary structure, subunit of a probable heterotrimeric complex consisting of an alpha catalytic (KIN10 or KIN11) subunit, and a beta (KINB) and a gamma (KING or SNF4) non-catalytic regulatory subunits. Interacts with SNF4 and CBL1. Interacts with FLZ1, FLZ2, FLZ8, FLZ9, FLZ10, FLZ12, FLZ13, FLZ14 and FLZ15. Post-translationally, sumoylated by SIZ1. In terms of tissue distribution, expressed in vegetative organs and, to lower extent, in reproductive organs.

It localises to the cell membrane. Functionally, regulatory subunit of the probable trimeric SNF1-related protein kinase (SnRK) complex, which may play a role in a signal transduction cascade regulating gene expression and carbohydrate metabolism in higher plants. The SnRK complex may also be involved in the regulation of fatty acid synthesis by phosphorylation of acetyl-CoA carboxylase and in assimilation of nitrogen by phosphorylating nitrate reductase. This chain is SNF1-related protein kinase regulatory subunit beta-1 (KINB1), found in Arabidopsis thaliana (Mouse-ear cress).